The sequence spans 331 residues: DNA fragmentation factor subunit alpha (331 aa).

Met-1 carries the N-acetylmethionine modification. Positions Pro-17 to Tyr-96 constitute a CIDE-N domain. Thr-243 bears the Phosphothreonine mark. Residues Leu-306–Ser-331 are disordered.

Heterodimer of DFFA and DFFB. In terms of processing, caspase-3 cleaves DFF45 at 2 sites to generate an active factor.

It is found in the cytoplasm. Functionally, inhibitor of the caspase-activated DNase (DFF40). The chain is DNA fragmentation factor subunit alpha (Dffa) from Mus musculus (Mouse).